A 424-amino-acid polypeptide reads, in one-letter code: Light-independent protochlorophyllide reductase subunit N (424 aa).

Residues Cys-16, Cys-41, and Cys-102 each coordinate [4Fe-4S] cluster.

This sequence belongs to the BchN/ChlN family. In terms of assembly, protochlorophyllide reductase is composed of three subunits; ChlL, ChlN and ChlB. Forms a heterotetramer of two ChlB and two ChlN subunits. Requires [4Fe-4S] cluster as cofactor.

It catalyses the reaction chlorophyllide a + oxidized 2[4Fe-4S]-[ferredoxin] + 2 ADP + 2 phosphate = protochlorophyllide a + reduced 2[4Fe-4S]-[ferredoxin] + 2 ATP + 2 H2O. The protein operates within porphyrin-containing compound metabolism; chlorophyll biosynthesis (light-independent). Functionally, component of the dark-operative protochlorophyllide reductase (DPOR) that uses Mg-ATP and reduced ferredoxin to reduce ring D of protochlorophyllide (Pchlide) to form chlorophyllide a (Chlide). This reaction is light-independent. The NB-protein (ChlN-ChlB) is the catalytic component of the complex. The polypeptide is Light-independent protochlorophyllide reductase subunit N (Synechococcus sp. (strain WH7803)).